The sequence spans 190 residues: NAD(P)H-quinone oxidoreductase subunit I (190 aa).

4Fe-4S ferredoxin-type domains are found at residues 55-84 and 95-124; these read GRIH…VDWT and KHYS…MTEE. 8 residues coordinate [4Fe-4S] cluster: cysteine 64, cysteine 67, cysteine 70, cysteine 74, cysteine 104, cysteine 107, cysteine 110, and cysteine 114. The disordered stretch occupies residues 169-190; the sequence is IEPHDLPAGSQRAGKRPEEITD.

It belongs to the complex I 23 kDa subunit family. NDH-1 is composed of at least 11 different subunits. [4Fe-4S] cluster serves as cofactor.

It is found in the cellular thylakoid membrane. It carries out the reaction a plastoquinone + NADH + (n+1) H(+)(in) = a plastoquinol + NAD(+) + n H(+)(out). The enzyme catalyses a plastoquinone + NADPH + (n+1) H(+)(in) = a plastoquinol + NADP(+) + n H(+)(out). Functionally, NDH-1 shuttles electrons from an unknown electron donor, via FMN and iron-sulfur (Fe-S) centers, to quinones in the respiratory and/or the photosynthetic chain. The immediate electron acceptor for the enzyme in this species is believed to be plastoquinone. Couples the redox reaction to proton translocation, and thus conserves the redox energy in a proton gradient. This chain is NAD(P)H-quinone oxidoreductase subunit I, found in Microcystis aeruginosa (strain NIES-843 / IAM M-2473).